The sequence spans 337 residues: Mitochondrial glutathione transporter SLC25A40 (337 aa).

Solcar repeat units follow at residues 14–132, 140–224, and 234–328; these read VTPL…LSAF, NETR…LKRW, and PTFM…GKSF. 6 helical membrane-spanning segments follow: residues 20–40, 104–124, 146–166, 200–221, 240–260, and 299–319; these read MIASCTGAVLTSLMVTPLDVV, LWSGLPPTLVMAIPATVIYFT, IVAGVVARFGAVTVISPLELI, WAPTILRDVPFSAMYWYNYENL, FTSGALSGSFAAVATLPFDVV, and GLFTGLIPRLVKIVPACAIMI.

It belongs to the mitochondrial carrier (TC 2.A.29) family.

The protein resides in the mitochondrion inner membrane. It catalyses the reaction glutathione(in) = glutathione(out). Functionally, probable mitochondrial transporter required for glutathione import into mitochondria. Glutathione, which plays key roles in oxidative metabolism, is produced exclusively in the cytosol and is imported in many organelles. Mitochondrial glutathione is required for the activity and stability of proteins containing iron-sulfur clusters, as well as erythropoiesis. The sequence is that of Mitochondrial glutathione transporter SLC25A40 from Mus musculus (Mouse).